Consider the following 1339-residue polypeptide: Receptor tyrosine-protein kinase erbB-3 (1339 aa).

The signal sequence occupies residues 1 to 19; it reads MSAIGTLQVLGFLLSLARG. The Extracellular portion of the chain corresponds to 20-641; it reads SEMGNSQAVC…QAEVLMSKPH (622 aa). An N-linked (GlcNAc...) asparagine glycan is attached at N126. 11 disulfide bridges follow: C186–C194, C190–C202, C210–C218, C214–C226, C227–C235, C231–C243, C246–C255, C259–C286, C290–C301, C305–C320, and C323–C327. N250 carries an N-linked (GlcNAc...) asparagine glycan. 5 N-linked (GlcNAc...) asparagine glycosylation sites follow: N353, N408, N414, N437, and N469. 10 cysteine pairs are disulfide-bonded: C500/C509, C504/C517, C520/C529, C533/C549, C552/C565, C556/C573, C576/C585, C589/C610, C613/C621, and C617/C629. N522 carries an N-linked (GlcNAc...) asparagine glycan. N-linked (GlcNAc...) asparagine glycosylation occurs at N566. N-linked (GlcNAc...) asparagine glycosylation occurs at N616. The helical transmembrane segment at 642 to 662 threads the bilayer; that stretch reads LVIAVTVGLTVIFLILGGSFL. Over 663–1339 the chain is Cytoplasmic; the sequence is YWRGRRIQNK…LFPKANAQRI (677 aa). Residue S684 is modified to Phosphoserine. The Protein kinase domain occupies 707 to 964; it reads LRKLKVLGSG…TFKELANEFT (258 aa). Residues 713–721, K740, 786–788, and 832–837 contribute to the ATP site; these read LGSGVFGTV, QYL, and DLALRN. The active-site Proton acceptor is the D832. S980 carries the post-translational modification Phosphoserine. Disordered stretches follow at residues 1028–1052, 1077–1156, and 1181–1212; these read LSLPTGTLTRPRGSQSLLSPSSGYM, RPIS…GNGY, and SVLGTEEEDEDEEYEYMNRKRRGSPARPPRPG. Residues 1185–1195 show a composition bias toward acidic residues; it reads TEEEDEDEEYE.

Belongs to the protein kinase superfamily. Tyr protein kinase family. EGF receptor subfamily. Monomer and homodimer. Heterodimer with each of the other ERBB receptors (Potential). Interacts with CSPG5, PA2G4, GRB7 and MUC1. Interacts with MYOC. Found in a ternary complex with NRG1 and ITGAV:ITGB3 or ITGA6:ITGB4. Post-translationally, autophosphorylated. Ligand-binding increases phosphorylation on tyrosine residues and promotes its association with the p85 subunit of phosphatidylinositol 3-kinase. As to expression, in the muscle, expression localizes to the synaptic sites of muscle fibers.

The protein localises to the membrane. It carries out the reaction L-tyrosyl-[protein] + ATP = O-phospho-L-tyrosyl-[protein] + ADP + H(+). Tyrosine-protein kinase that plays an essential role as cell surface receptor for neuregulins. Binds to neuregulin-1 (NRG1) and is activated by it; ligand-binding increases phosphorylation on tyrosine residues and promotes its association with the p85 subunit of phosphatidylinositol 3-kinase. May also be activated by CSPG5. Involved in the regulation of myeloid cell differentiation. The chain is Receptor tyrosine-protein kinase erbB-3 (Erbb3) from Mus musculus (Mouse).